Reading from the N-terminus, the 115-residue chain is NAD(P)H-quinone oxidoreductase subunit M (115 aa).

The protein belongs to the complex I NdhM subunit family. In terms of assembly, NDH-1 can be composed of about 15 different subunits; different subcomplexes with different compositions have been identified which probably have different functions.

Its subcellular location is the cellular thylakoid membrane. It catalyses the reaction a plastoquinone + NADH + (n+1) H(+)(in) = a plastoquinol + NAD(+) + n H(+)(out). The catalysed reaction is a plastoquinone + NADPH + (n+1) H(+)(in) = a plastoquinol + NADP(+) + n H(+)(out). Functionally, NDH-1 shuttles electrons from an unknown electron donor, via FMN and iron-sulfur (Fe-S) centers, to quinones in the respiratory and/or the photosynthetic chain. The immediate electron acceptor for the enzyme in this species is believed to be plastoquinone. Couples the redox reaction to proton translocation, and thus conserves the redox energy in a proton gradient. Cyanobacterial NDH-1 also plays a role in inorganic carbon-concentration. The sequence is that of NAD(P)H-quinone oxidoreductase subunit M from Prochlorococcus marinus (strain MIT 9211).